Here is a 143-residue protein sequence, read N- to C-terminus: Large ribosomal subunit protein uL15 (143 aa).

The interval 1–54 (MQLNSIKPAPGAKHPKRRVGRGIGSGLGKTAGRGHKGQKSRAGGFHKVGFEGGQ) is disordered. Gly residues predominate over residues 21–31 (RGIGSGLGKTA).

This sequence belongs to the universal ribosomal protein uL15 family. Part of the 50S ribosomal subunit.

Its function is as follows. Binds to the 23S rRNA. The protein is Large ribosomal subunit protein uL15 of Nitrosospira multiformis (strain ATCC 25196 / NCIMB 11849 / C 71).